Consider the following 185-residue polypeptide: Comitin (185 aa).

The 123-residue stretch at 1–123 folds into the Bulb-type lectin domain; that stretch reads MELLRQGEHL…YKQILYSSKP (123 aa). The interval 138–185 is disordered; it reads SGHPQSAYPPQQPGYGYPAQPGYPPQPGYPPQHGYPPQHGYPQQPGYY. A compositionally biased stretch (low complexity) spans 141 to 157; it reads PQSAYPPQQPGYGYPAQ. Repeat copies occupy residues 153-158, 159-164, 165-170, 171-176, and 177-182. Residues 153–182 form a 5 X 6 AA tandem repeats of G-Y-P-X-Q-[PH] region; it reads GYPAQPGYPPQPGYPPQHGYPPQHGYPQQP. Over residues 158–171 the composition is skewed to pro residues; sequence PGYPPQPGYPPQHG. The segment covering 172–185 has biased composition (low complexity); that stretch reads YPPQHGYPQQPGYY.

In terms of assembly, homodimer in solution. Post-translationally, the N-terminus is blocked.

The protein resides in the golgi apparatus membrane. It is found in the endomembrane system. The protein localises to the cytoplasm. Its subcellular location is the cytoskeleton. Functionally, may have a role in cell motility. It has high affinity for both G-actin and F-actin. Binds to vesicle membranes via mannose residues and, by way of its interaction with actin, links these membranes to the cytoskeleton. This is Comitin (comA) from Dictyostelium discoideum (Social amoeba).